We begin with the raw amino-acid sequence, 378 residues long: Galanin receptor 2b (378 aa).

Over 1 to 30 (MSDHEDLNKAMGHWNASESYQLNPASVIVS) the chain is Extracellular. Residues 31–51 (VVFSLIFLLGTIGNSLVLAVL) traverse the membrane as a helical segment. Residues 52–62 (LRSGQVGYNTT) are Cytoplasmic-facing. Residues 63–83 (NLFILNLSVADFFFIIFCVPF) form a helical membrane-spanning segment. Residues 84–101 (QATIYSLEGWVFGSFMCK) lie on the Extracellular side of the membrane. An intrachain disulfide couples C100 to C177. Residues 102–123 (VVHFFINLTMYASSFTLAAVSV) traverse the membrane as a helical segment. Topologically, residues 124–143 (DRYLAIRYPLRSRELRTPCN) are cytoplasmic. The chain crosses the membrane as a helical span at residues 144 to 164 (AVVAMVVIWGLSLVFAGPYLS). Over 165–187 (YYDLIDFENSNVCVPGWEEHNRK) the chain is Extracellular. The helical transmembrane segment at 188 to 208 (VLDTCTFVFGYVIPVLIVSLS) threads the bilayer. The Cytoplasmic portion of the chain corresponds to 209–238 (YTRTIKYLWTAVDPLDGMSESKRAKRKVTK). The chain crosses the membrane as a helical span at residues 239 to 259 (MIIIVTVLFCICWLPYHVVIL). Over 260 to 276 (CYLYGDFPFNQTTYAFR) the chain is Extracellular. Residues 277-297 (LLSHCMAYANSCLNPIVYALV) traverse the membrane as a helical segment. Residues 298-378 (SKHFRKGFKK…TITLPFQNQP (81 aa)) are Cytoplasmic-facing. The tract at residues 339-362 (EVSQMNEENARQNESEMVNRPLAQ) is disordered.

It belongs to the G-protein coupled receptor 1 family. As to expression, expressed in neurons in the ventral area of the interpeduncular nucleus (IPN) where expression often overlaps with spx1.

The protein resides in the membrane. In terms of biological role, receptor for the hormone galanin. Receptor for the hormones spexin-1 and spexin-2. The polypeptide is Galanin receptor 2b (Danio rerio (Zebrafish)).